The primary structure comprises 102 residues: Small ribosomal subunit protein uS10 (102 aa).

Residues 34–58 (VSGPVPLPTKTLEVPSRKSPDGEGT) form a disordered region.

Belongs to the universal ribosomal protein uS10 family. As to quaternary structure, part of the 30S ribosomal subunit.

Involved in the binding of tRNA to the ribosomes. The protein is Small ribosomal subunit protein uS10 of Halobacterium salinarum (strain ATCC 29341 / DSM 671 / R1).